The primary structure comprises 96 residues: Large ribosomal subunit protein uL23 (96 aa).

It belongs to the universal ribosomal protein uL23 family. In terms of assembly, part of the 50S ribosomal subunit. Contacts protein L29, and trigger factor when it is bound to the ribosome.

Its function is as follows. One of the early assembly proteins it binds 23S rRNA. One of the proteins that surrounds the polypeptide exit tunnel on the outside of the ribosome. Forms the main docking site for trigger factor binding to the ribosome. The protein is Large ribosomal subunit protein uL23 of Caldicellulosiruptor saccharolyticus (strain ATCC 43494 / DSM 8903 / Tp8T 6331).